The primary structure comprises 505 residues: Methylmalonyl-CoA carboxyltransferase 5S subunit (505 aa).

In terms of domain architecture, Pyruvate carboxyltransferase spans valine 14–histidine 276. Substrate contacts are provided by residues arginine 22–glutamine 26, alanine 59, and lysine 184. Residue aspartate 23 coordinates Co(2+). 3 residues coordinate Co(2+): lysine 184, histidine 215, and histidine 217. Lysine 184 is subject to N6-carboxylysine; partial.

In terms of assembly, homodimer. Transcarboxylase is composed of three subunits: 1.3S, 5S, and 12S. The core of the enzyme is composed of six 12S subunits. On each side of the core there are three pairs of 5S subunits. Each 5S dimer is attached to the core by two 1.3S subunits. Thus the total number of chains is 30 (6 + 12 + 12). Co(2+) serves as cofactor. Lys-184 is carboxylated in the free enzyme and helps to coordinate the cobalt ion. Lys-184 is partially carboxylated in the complex with pyruvate, but is not carboxylated in the oxaloacetate-bound form.

The catalysed reaction is (S)-methylmalonyl-CoA + pyruvate = propanoyl-CoA + oxaloacetate. In terms of biological role, the 5S subunit specifically catalyzes the transfer of the carboxyl group from biotin of the 1.3S subunit to pyruvate to form oxaloacetate and 1.3S biotin. This Propionibacterium freudenreichii subsp. shermanii protein is Methylmalonyl-CoA carboxyltransferase 5S subunit.